A 278-amino-acid chain; its full sequence is NAD kinase (278 aa).

Asp56 functions as the Proton acceptor in the catalytic mechanism. NAD(+) is bound by residues 56–57 (DG), 132–133 (NE), Arg158, Asp160, and 171–176 (TAYNKS).

This sequence belongs to the NAD kinase family. A divalent metal cation serves as cofactor.

It is found in the cytoplasm. The catalysed reaction is NAD(+) + ATP = ADP + NADP(+) + H(+). Its function is as follows. Involved in the regulation of the intracellular balance of NAD and NADP, and is a key enzyme in the biosynthesis of NADP. Catalyzes specifically the phosphorylation on 2'-hydroxyl of the adenosine moiety of NAD to yield NADP. This is NAD kinase from Streptococcus agalactiae serotype III (strain NEM316).